The following is a 156-amino-acid chain: MNLNATLIGQLIAFALFVWFCMKFVWPPIINAIETRQSQIANALASAEAAKKEQADTKNLVEQELSAAKVQAQEILDAANKRRNEVLDEVKAEAEELKAKIIAQGYAEVEAERKRVQEELRLKVASLAVAGAEKIVGRSIDEAANNDIIDKLVAEL.

A helical membrane pass occupies residues 11 to 31; the sequence is LIAFALFVWFCMKFVWPPIIN.

The protein belongs to the ATPase B chain family. As to quaternary structure, F-type ATPases have 2 components, F(1) - the catalytic core - and F(0) - the membrane proton channel. F(1) has five subunits: alpha(3), beta(3), gamma(1), delta(1), epsilon(1). F(0) has three main subunits: a(1), b(2) and c(10-14). The alpha and beta chains form an alternating ring which encloses part of the gamma chain. F(1) is attached to F(0) by a central stalk formed by the gamma and epsilon chains, while a peripheral stalk is formed by the delta and b chains.

Its subcellular location is the cell inner membrane. Functionally, f(1)F(0) ATP synthase produces ATP from ADP in the presence of a proton or sodium gradient. F-type ATPases consist of two structural domains, F(1) containing the extramembraneous catalytic core and F(0) containing the membrane proton channel, linked together by a central stalk and a peripheral stalk. During catalysis, ATP synthesis in the catalytic domain of F(1) is coupled via a rotary mechanism of the central stalk subunits to proton translocation. In terms of biological role, component of the F(0) channel, it forms part of the peripheral stalk, linking F(1) to F(0). The protein is ATP synthase subunit b of Haemophilus influenzae (strain PittGG).